A 294-amino-acid chain; its full sequence is Cytidine deaminase (294 aa).

CMP/dCMP-type deaminase domains follow at residues Asp-48–Lys-168 and Leu-186–Gly-294. Residue Asn-89 to Glu-91 participates in substrate binding. His-102 contacts Zn(2+). Catalysis depends on Glu-104, which acts as the Proton donor. Zn(2+) contacts are provided by Cys-129 and Cys-132.

This sequence belongs to the cytidine and deoxycytidylate deaminase family. Homodimer. Zn(2+) is required as a cofactor.

The catalysed reaction is cytidine + H2O + H(+) = uridine + NH4(+). It catalyses the reaction 2'-deoxycytidine + H2O + H(+) = 2'-deoxyuridine + NH4(+). In terms of biological role, this enzyme scavenges exogenous and endogenous cytidine and 2'-deoxycytidine for UMP synthesis. This Salmonella choleraesuis (strain SC-B67) protein is Cytidine deaminase.